Consider the following 279-residue polypeptide: Glutamate racemase (279 aa).

Substrate-binding positions include 13–14 (DS) and 45–46 (YG). Residue C76 is the Proton donor/acceptor of the active site. Substrate is bound at residue 77–78 (NT). C185 acts as the Proton donor/acceptor in catalysis. 186-187 (TH) is a binding site for substrate.

Belongs to the aspartate/glutamate racemases family.

The catalysed reaction is L-glutamate = D-glutamate. It participates in cell wall biogenesis; peptidoglycan biosynthesis. Functionally, provides the (R)-glutamate required for cell wall biosynthesis. This Picosynechococcus sp. (strain ATCC 27264 / PCC 7002 / PR-6) (Agmenellum quadruplicatum) protein is Glutamate racemase.